We begin with the raw amino-acid sequence, 996 residues long: Sodium/potassium-transporting ATPase subunit alpha-A (996 aa).

2 helical membrane passes run 73-93 (LFGG…IAYT) and 107-123 (LYLG…TGCF). Residues 191–211 (DNSSLTGESEPQSRSTECTND) are disordered. A run of 2 helical transmembrane segments spans residues 268 to 290 (FIHI…SFLY) and 297 to 325 (AAIF…TLTA). D353 functions as the 4-aspartylphosphate intermediate in the catalytic mechanism. ATP is bound at residue K483. Mg(2+) is bound by residues D692 and D696. Transmembrane regions (helical) follow at residues 762-785 (LSPF…ILCI), 820-847 (ERLI…VIMG), 889-909 (YTCH…DLII), and 926-951 (TLNF…DKGL).

It belongs to the cation transport ATPase (P-type) (TC 3.A.3) family. Type IIC subfamily. The sodium/potassium-transporting ATPase is composed of a catalytic alpha subunit, an auxiliary non-catalytic beta subunit and an additional regulatory subunit.

The protein resides in the cell membrane. It catalyses the reaction K(+)(out) + Na(+)(in) + ATP + H2O = K(+)(in) + Na(+)(out) + ADP + phosphate + H(+). Functionally, this is the catalytic component of the active enzyme, which catalyzes the hydrolysis of ATP coupled with the exchange of sodium and potassium ions across the plasma membrane. This action creates the electrochemical gradient of sodium and potassium ions, providing the energy for active transport of various nutrients. In Artemia franciscana (Brine shrimp), this protein is Sodium/potassium-transporting ATPase subunit alpha-A.